The sequence spans 980 residues: Putative leucine-rich repeat receptor-like serine/threonine-protein kinase At2g24130 (980 aa).

Residues 1–20 (MDYCSLLVVSFLITVMTVLA) form the signal peptide. At 21 to 593 (SKENDHELIK…ACKKKHKYPS (573 aa)) the chain is on the extracellular side. Residues Asn55 and Asn88 are each glycosylated (N-linked (GlcNAc...) asparagine). 8 LRR repeats span residues 65–89 (STQVIELDISGRDLGGEISPSIANL), 90–113 (TGLTVLDLSRNFFVGKIPPEIGSL), 115–138 (ETLKQLSLSENLLHGNIPQELGLL), 139–162 (NRLVYLDLGSNRLNGSIPVQLFCN), 165–189 (SSSLQYIDLSNNSLTGEIPLNYHCH), 191–214 (KELRFLLLWSNKLTGTVPSSLSNS), 215–238 (TNLKWMDLESNMLSGELPSQVISK), and 240–263 (PQLQFLYLSYNHFVSHNNNTNLEP). N-linked (GlcNAc...) asparagine glycans are attached at residues Asn152, Asn162, Asn175, and Asn213. N-linked (GlcNAc...) asparagine glycans are attached at residues Asn257 and Asn270. LRR repeat units follow at residues 271–295 (SSDLQELELAGNSLGGEITSSVRHL), 296–320 (SVNLVQIHLDQNRIHGSIPPEISNL), 322–344 (NLTLLNLSSNLLSGPIPRELCKL), 345–370 (SKLERVYLSNNHLTGEIPMELGDIPR), 372–391 (GLLDVSRNNLSGSIPDSFGN), 392–416 (LSQLRRLLLYGNHLSGTVPQSLGKC), 417–440 (INLEILDLSHNNLTGTIPVEVVSN), 442–463 (RNLKLYLNLSSNHLSGPIPLEL), 464–490 (SKMDMVLSVDLSSNELSGKIPPQLGSC), 491–514 (IALEHLNLSRNGFSSTLPSSLGQL), 515–537 (PYLKELDVSFNRLTGAIPPSFQQ), and 539–563 (STLKHLNFSFNLLSGNVSDKGSFSK). 2 N-linked (GlcNAc...) asparagine glycosylation sites follow: Asn322 and Asn327. N-linked (GlcNAc...) asparagine glycans are attached at residues Asn380 and Asn391. Residues Asn428 and Asn449 are each glycosylated (N-linked (GlcNAc...) asparagine). The N-linked (GlcNAc...) asparagine glycan is linked to Asn497. N-linked (GlcNAc...) asparagine glycosylation is found at Asn545 and Asn554. A helical transmembrane segment spans residues 594–614 (VLLPVLLSLIATPVLCVFGYP). Over 615 to 980 (LVQRSRFGKN…SQETQGEASS (366 aa)) the chain is Cytoplasmic. A Phosphothreonine modification is found at Thr658. Residues 661-960 (FNASSLIGSG…HEMGRLKEYL (300 aa)) enclose the Protein kinase domain. Residues 667 to 675 (IGSGRFGHV) and Lys689 each bind ATP. Tyr775 carries the post-translational modification Phosphotyrosine. Catalysis depends on Asp788, which acts as the Proton acceptor. Residue Tyr841 is modified to Phosphotyrosine.

This sequence belongs to the protein kinase superfamily. Ser/Thr protein kinase family.

It localises to the cell membrane. The catalysed reaction is L-seryl-[protein] + ATP = O-phospho-L-seryl-[protein] + ADP + H(+). The enzyme catalyses L-threonyl-[protein] + ATP = O-phospho-L-threonyl-[protein] + ADP + H(+). The chain is Putative leucine-rich repeat receptor-like serine/threonine-protein kinase At2g24130 from Arabidopsis thaliana (Mouse-ear cress).